The primary structure comprises 312 residues: Cytochrome f (312 aa).

A signal peptide spans 1–28 (MQISKFFKFVFISVSLCGSLLFPQMANA). Heme is bound by residues Tyr-29, Cys-49, Cys-52, and His-53. Residues 278–298 (VKGMIAFFFTVTVAQILLVLK) form a helical membrane-spanning segment.

Belongs to the cytochrome f family. In terms of assembly, the 4 large subunits of the cytochrome b6-f complex are cytochrome b6, subunit IV (17 kDa polypeptide, petD), cytochrome f and the Rieske protein, while the 4 small subunits are PetG, PetL, PetM and PetN. The complex functions as a dimer. It depends on heme as a cofactor.

Its subcellular location is the plastid. The protein resides in the chloroplast thylakoid membrane. In terms of biological role, component of the cytochrome b6-f complex, which mediates electron transfer between photosystem II (PSII) and photosystem I (PSI), cyclic electron flow around PSI, and state transitions. The chain is Cytochrome f from Emiliania huxleyi (Coccolithophore).